The following is a 267-amino-acid chain: Luciferase (267 aa).

N4 carries N-linked (GlcNAc...) asparagine glycosylation. A helical transmembrane segment spans residues L17–I39.

The protein belongs to the fungal luciferase family.

It is found in the membrane. It carries out the reaction 3-hydroxyhispidin + O2 = (E)-caffeoylpyruvate + hnu + CO2. The catalysed reaction is 3-hydroxyhispidin + O2 = 4-[(E)-2-(3,4-dihydroxyphenyl)ethenyl]-1,7-dihydroxy-2,3,5-trioxabicyclo[2.2.2]oct-7-en-6-one. Its function is as follows. Luciferase; part of the gene cluster that mediates the fungal bioluminescence cycle. Uses the fungal luciferin 3-hydroxyhispidin as a substrate to produce an endoperoxide as a high-energy intermediate with decomposition that yields oxyluciferin (also known as caffeoylpyruvate) and light emission. The fungal bioluminescence cycle begins with the hispidin synthetase that catalyzes the formation of hispidin which is further hydroxylated by the hispidin-3-hydroxylase, yielding the fungal luciferin 3-hydroxyhispidin. The luciferase then produces an endoperoxide as a high-energy intermediate with decomposition that yields oxyluciferin and light emission. Oxyluciferin can be recycled to caffeic acid by caffeoylpyruvate hydrolase. This is Luciferase from Neonothopanus nambi (Agaricus nambi).